A 289-amino-acid polypeptide reads, in one-letter code: MAESVAHPSVLNATEEDIKQLLAASCHIGSKNLEIRMENYVWKRRADGVNIINIGKTWEKIVLAARIIATVENPADVCVVSSRPYGHRAVLKFAAHTGATAIAGRFTPGNFTNYITRTFREPRLIIATDPRADAQAIKEASYVNIPVIALCDTDSPLAHVDVAIPTNNKGYKSIGLVWWLLAREVLRLRGALTRTGAWDVMVDMYFYRDPEEIEREEEAKAAAEAAAEAATTAEAAAEFEAVAAGAVDADVLAAATAGQVGEGAWDEAATGDWSTVGASTSDWTATAAQ.

This sequence belongs to the universal ribosomal protein uS2 family. Component of the small ribosomal subunit. Mature ribosomes consist of a small (40S) and a large (60S) subunit. The 40S subunit contains about 33 different proteins and 1 molecule of RNA (18S). The 60S subunit contains about 49 different proteins and 3 molecules of RNA (25S, 5.8S and 5S). Interacts with rps21.

The protein resides in the cytoplasm. In terms of biological role, required for the assembly and/or stability of the 40S ribosomal subunit. Required for the processing of the 20S rRNA-precursor to mature 18S rRNA in a late step of the maturation of 40S ribosomal subunits. The protein is Small ribosomal subunit protein uS2C (rps0c) of Schizosaccharomyces japonicus (strain yFS275 / FY16936) (Fission yeast).